A 211-amino-acid chain; its full sequence is Wound-induced protein WIN2 (211 aa).

A signal peptide spans 1–25 (MVKLSCGPILLALVLCISLTSVANA). One can recognise a Chitin-binding type-1 domain in the interval 26-68 (QQCGRQRGGALCGNNLCCSQFGWCGSTPEYCSPSQGCQSQCTG). 4 cysteine pairs are disulfide-bonded: Cys28-Cys43, Cys37-Cys49, Cys42-Cys56, and Cys62-Cys66. In terms of domain architecture, Barwin spans 77–198 (GSAQNVRATY…VNYQFVNCGD (122 aa)).

The protein is Wound-induced protein WIN2 (WIN2) of Solanum tuberosum (Potato).